Here is a 109-residue protein sequence, read N- to C-terminus: Mitochondrial pyruvate carrier 1 (109 aa).

At Ala2 the chain carries N-acetylalanine. Over Ala2–Asp20 the chain is Mitochondrial matrix. Residues Tyr21 to Ile41 traverse the membrane as a helical segment. Over Asn42 to Ser52 the chain is Mitochondrial intermembrane. Residues Gly53–Tyr71 form a helical membrane-spanning segment. At Lys72 the chain carries N6-acetyllysine. Topologically, residues Lys72 to Ala109 are mitochondrial matrix.

Belongs to the mitochondrial pyruvate carrier (MPC) (TC 2.A.105) family. Homodimer. Forms heterodimer with MPC2. The heterodimer is the more stable and dominant form.

It localises to the mitochondrion inner membrane. It carries out the reaction pyruvate(out) + H(+)(out) = pyruvate(in) + H(+)(in). Mediates the uptake of pyruvate into mitochondria. In Homo sapiens (Human), this protein is Mitochondrial pyruvate carrier 1 (MPC1).